A 1550-amino-acid polypeptide reads, in one-letter code: Adhesion G protein-coupled receptor L3 (1550 aa).

The signal sequence occupies residues 1 to 19; that stretch reads MCPPQLFILMMLLAPVVHG. Residues 20–948 lie on the Extracellular side of the membrane; the sequence is GKHNERHPAL…VHDLLLDVIT (929 aa). Residues 34–80 are disordered; that stretch reads RHAEHSPGGPLPPRHLLQQPAAERSTAHRGQGPRGTARGVRGPGAPG. An SUEL-type lectin domain is found at 103 to 192; that stretch reads SCESYPIELR…KYLEVQYECV (90 aa). 5 disulfide bridges follow: C104/C134, C113/C191, C146/C178, C159/C165, and C203/C385. Residue N161 is glycosylated (N-linked (GlcNAc...) asparagine). In terms of domain architecture, Olfactomedin-like spans 202-461; that stretch reads LCPGLLKGVY…VVKYSLDFGP (260 aa). The tract at residues 317 to 347 is interaction with FLRT3; it reads YHDTSPYRWGGKSDIDLAVDENGLWVIYATE. Positions 332, 380, 381, and 435 each coordinate Ca(2+). The interval 518-538 is disordered; the sequence is NLGRSTTPSLPGRRNRSTSTP. N-linked (GlcNAc...) asparagine glycans are attached at residues N532, N616, N839, N884, and N910. Positions 755–934 constitute a GAIN-B domain; it reads DIVRENTDNI…AVLMAHVEVK (180 aa). 2 cysteine pairs are disulfide-bonded: C885–C916 and C904–C918. Residues 885–934 form a GPS region; the sequence is CSFWSYSKRTMTGYWSTQGCRLLTTNKTHTTCSCNHLTNFAVLMAHVEVK. The segment at 922–938 is stachel; it reads TNFAVLMAHVEVKHSDA. Residues 949 to 969 traverse the membrane as a helical segment; it reads WVGILLSLVCLLICIFTFCFF. Over 970-977 the chain is Cytoplasmic; it reads RGLQSDRN. The chain crosses the membrane as a helical span at residues 978–998; the sequence is TIHKNLCISLFVAELLFLIGI. A glycan (N-linked (GlcNAc...) asparagine) is linked at N999. Residues 999–1006 are Extracellular-facing; sequence NRTDQPIA. Residues 1007 to 1027 form a helical membrane-spanning segment; that stretch reads CAVFAALLHFFFLAAFTWMFL. The Cytoplasmic portion of the chain corresponds to 1028–1048; sequence EGVQLYIMLVEVFESEHSRRK. A helical transmembrane segment spans residues 1049-1069; that stretch reads YFYLVGYGMPALIVAVSAAVD. Over 1070-1087 the chain is Extracellular; it reads YRSYGTDKVCWLRLDTYF. A helical transmembrane segment spans residues 1088–1108; sequence IWSFIGPATLIIMLNVIFLGI. Over 1109-1141 the chain is Cytoplasmic; it reads ALYKMFHHTAILKPESGCLDNINYEDNRPFIKS. A helical membrane pass occupies residues 1142 to 1162; the sequence is WVIGAIALLCLLGLTWAFGLM. At 1163 to 1168 the chain is on the extracellular side; the sequence is YINEST. A glycan (N-linked (GlcNAc...) asparagine) is linked at N1165. Residues 1169 to 1189 form a helical membrane-spanning segment; the sequence is VIMAYLFTIFNSLQGMFIFIF. Over 1190–1550 the chain is Cytoplasmic; sequence HCVLQKKVRK…KGPAHLVTSL (361 aa). The interval 1213–1236 is disordered; that stretch reads KSTESSIGSGKTSGSRTPGRYSTG. At S1253 the chain carries Phosphoserine. Disordered stretches follow at residues 1410 to 1435 and 1528 to 1550; these read LLPP…PQDH and PPNK…VTSL. A Phosphoserine modification is found at S1535. A PDZ-binding motif is present at residues 1545–1550; sequence HLVTSL.

This sequence belongs to the G-protein coupled receptor 2 family. LN-TM7 subfamily. Heterodimer of 2 chains generated by proteolytic processing; the large extracellular N-terminal fragment and the membrane-bound C-terminal fragment predominantly remain associated and non-covalently linked. Interacts (via olfactomedin-like domain) with FLRT1 (via extracellular domain). Interacts (via olfactomedin-like domain) with FLRT2 (via extracellular domain). Interacts (via olfactomedin-like domain) with FLRT3 (via extracellular domain); the interaction is direct. Interacts (via extracellular domain) with TENM1. Interacts (via extracellular domain) with TENM2. Interacts (via extracellular domain) with TENM3. Identified in a complex with FLRT3 and UNC5B; does not interact with UNC5B by itself. Identified in a complex with FLRT3 and UNC5D; does not interact with UNC5D by itself. In terms of assembly, interacts (via PDZ-binding motif) with SHANK3. Interacts (via PDZ-binding motif) with DLG4. Post-translationally, autoproteolytically processed at the GPS region of the GAIN-B domain; this cleavage modulates receptor activity. Predominantly expressed in brain, followed by heart, placenta, pancreas, kidney and testis.

Its subcellular location is the cell membrane. The protein resides in the postsynaptic cell membrane. It localises to the cell projection. It is found in the axon. The protein localises to the cell junction. Its activity is regulated as follows. Forms a heterodimer of 2 chains generated by proteolytic processing that remain associated through non-covalent interactions mediated by the GAIN-B domain. In the inactivated receptor, the Stachel sequence (also named stalk) is embedded in the GAIN-B domain, where it adopts a beta-strand conformation. On activation, the Stachel moves into the 7 transmembrane region and adopts a twisted hook-shaped configuration that forms contacts within the receptor, leading to coupling of a G-alpha protein, which activates signaling. The cleaved GAIN-B and N-terminal domains can then dissociate from the rest of the receptor. Its function is as follows. Orphan adhesion G-protein coupled receptor (aGPCR), which mediates synapse specificity. Ligand binding causes a conformation change that triggers signaling via guanine nucleotide-binding proteins (G proteins) and modulates the activity of downstream effectors. ADGRL3 is coupled with different classes of G alpha proteins, such as G(12)/G(13), G(s), G(i) or G(q), depending on the context. Coupling to G(12)/G(13) G proteins, which mediates the activation Rho small GTPases is the most efficient. Following G-protein coupled receptor activation, associates with cell adhesion molecules that are expressed at the surface of adjacent cells to direct synapse specificity. Specifically mediates the establishment of Schaffer-collateral synapses formed by CA3-region axons on CA1-region pyramidal neurons in the hippocampus. Localizes to postsynaptic spines in excitatory synapses in the S.oriens and S.radiatum and interacts with presynaptic cell adhesion molecules FLRT3 and TENM2, promoting synapse formation. Plays a role in the development of glutamatergic synapses in the cortex. Important in determining the connectivity rates between the principal neurons in the cortex. Functionally, orphan adhesion G-protein coupled receptor (aGPCR), which mediates synapse specificity. Ligand binding causes a conformation change that triggers signaling via guanine nucleotide-binding proteins (G proteins) and modulates the activity of downstream effectors, such as adenylate cyclase. Isoform 1 is specifically coupled to G(s) G proteins and mediates activation of adenylate cyclase activity. Following G-protein coupled receptor activation, undergoes liquid-liquid phase transition, associates with (1) cell adhesion molecules that are expressed at the surface of adjacent cells, as well as (2) PDZ-containing proteins, such as SHANK3 and DLG4, in the cytoplasm to direct synapse formation. The polypeptide is Adhesion G protein-coupled receptor L3 (Rattus norvegicus (Rat)).